A 921-amino-acid chain; its full sequence is 2-oxoadipate dehydrogenase complex component E1 (921 aa).

N6-succinyllysine occurs at positions 184 and 189. The tract at residues 300–319 (GKTRGRQQSREDGDYSPNGS) is disordered. 2 positions are modified to N6-succinyllysine: Lys801 and Lys819.

This sequence belongs to the alpha-ketoglutarate dehydrogenase family. The 2-oxoadipate dehydrogenase complex is composed of OADH (2-oxoadipate dehydrogenase; E1a), DLST (dihydrolipoamide succinyltransferase; E2) and DLD (dihydrolipoamide dehydrogenase; E3). E1a functional unit is a dimer. Thiamine diphosphate serves as cofactor.

The protein resides in the mitochondrion. It carries out the reaction N(6)-[(R)-lipoyl]-L-lysyl-[protein] + 2-oxoadipate + H(+) = N(6)-[(R)-S(8)-glutaryldihydrolipoyl]-L-lysyl-[protein] + CO2. The protein operates within amino-acid degradation. Its function is as follows. 2-oxoadipate dehydrogenase (E1a) component of the 2-oxoadipate dehydrogenase complex (OADHC). Participates in the first step, rate limiting for the overall conversion of 2-oxoadipate (alpha-ketoadipate) to glutaryl-CoA and CO(2) catalyzed by the whole OADHC. Catalyzes the irreversible decarboxylation of 2-oxoadipate via the thiamine diphosphate (ThDP) cofactor and subsequent transfer of the decarboxylated acyl intermediate on an oxidized dihydrolipoyl group that is covalently amidated to the E2 enzyme (dihydrolipoyllysine-residue succinyltransferase or DLST). Can catalyze the decarboxylation of 2-oxoglutarate in vitro, but at a much lower rate than 2-oxoadipate. Responsible for the last step of L-lysine, L-hydroxylysine and L-tryptophan catabolism with the common product being 2-oxoadipate. The protein is 2-oxoadipate dehydrogenase complex component E1 (Dhtkd1) of Mus musculus (Mouse).